We begin with the raw amino-acid sequence, 404 residues long: MRKLGLALSIMGLLLVSIVAGCIGGGTETKTEAKKVKVAILFDVGGRGDLSFNDMAYLGAERAKKELGVEIEYMTPKSKEDMKPLLEQLAQSKEYDLLVLVGFLWTSPLNEVADKYPDQKFALIDSTTGKVRENEVDILFREQEAAALMGVIASGMAYELGGDTIGAVAGMDIPPLWKFHIGYLFGAKYFEKKTGKPVKLLWQYTGTFGDTQVGYNTAMQLLQQGAKVLYGLAGLTHVGMFDAVKDWNEQGRGKALAMGQDASQEWYAPKYIPISGAKRVDVAVYDAIKMVVDGTWKGGIITLGLKENGVGYWDLDGVKQFAEFAKEAGKLKDMTPDEVVQIVKEQREKYIKPYVWDIVHELEEKIKSGEIVFKTPKTHEEYEQIIRELEKGNLNAALEKGSVE.

Positions 1-21 are cleaved as a signal peptide; the sequence is MRKLGLALSIMGLLLVSIVAG. C22 is modified (N-acetylcysteine). C22 carries the S-archaeol cysteine lipid modification.

This sequence belongs to the BMP lipoprotein family.

Its subcellular location is the cell membrane. This is an uncharacterized protein from Pyrococcus abyssi (strain GE5 / Orsay).